A 127-amino-acid polypeptide reads, in one-letter code: Fluoride-specific ion channel FluC (127 aa).

3 helical membrane-spanning segments follow: residues 37–57 (TSFVNIAGSLAMGLLAGWLAL), 68–88 (LFLATGVLGGFTTFSAFSLEV), and 102–122 (LYAGVSVLLGVSALFIGLWMA). Positions 76 and 79 each coordinate Na(+).

This sequence belongs to the fluoride channel Fluc/FEX (TC 1.A.43) family.

Its subcellular location is the cell inner membrane. It catalyses the reaction fluoride(in) = fluoride(out). Its activity is regulated as follows. Na(+) is not transported, but it plays an essential structural role and its presence is essential for fluoride channel function. In terms of biological role, fluoride-specific ion channel. Important for reducing fluoride concentration in the cell, thus reducing its toxicity. This is Fluoride-specific ion channel FluC from Hyphomonas neptunium (strain ATCC 15444).